Consider the following 417-residue polypeptide: NADH-quinone oxidoreductase subunit D (417 aa).

Belongs to the complex I 49 kDa subunit family. As to quaternary structure, NDH-1 is composed of 14 different subunits. Subunits NuoB, C, D, E, F, and G constitute the peripheral sector of the complex.

It localises to the cell inner membrane. The enzyme catalyses a quinone + NADH + 5 H(+)(in) = a quinol + NAD(+) + 4 H(+)(out). In terms of biological role, NDH-1 shuttles electrons from NADH, via FMN and iron-sulfur (Fe-S) centers, to quinones in the respiratory chain. The immediate electron acceptor for the enzyme in this species is believed to be ubiquinone. Couples the redox reaction to proton translocation (for every two electrons transferred, four hydrogen ions are translocated across the cytoplasmic membrane), and thus conserves the redox energy in a proton gradient. This Nitrosospira multiformis (strain ATCC 25196 / NCIMB 11849 / C 71) protein is NADH-quinone oxidoreductase subunit D.